A 350-amino-acid chain; its full sequence is Small ribosomal subunit biogenesis GTPase RsgA (350 aa).

Over residues 1–17 (MSKNKLSKGQQRRVNAN) the composition is skewed to polar residues. A disordered region spans residues 1–27 (MSKNKLSKGQQRRVNANHQRRLKTSAE). Residues 104–273 (TSVLTRPDFY…VIDSPGVREF (170 aa)) form the CP-type G domain. GTP contacts are provided by residues 160-163 (NKID) and 214-222 (GQSGVGKSS). Zn(2+)-binding residues include Cys-297, Cys-302, His-304, and Cys-310.

It belongs to the TRAFAC class YlqF/YawG GTPase family. RsgA subfamily. Monomer. Associates with 30S ribosomal subunit, binds 16S rRNA. Zn(2+) serves as cofactor.

The protein localises to the cytoplasm. One of several proteins that assist in the late maturation steps of the functional core of the 30S ribosomal subunit. Helps release RbfA from mature subunits. May play a role in the assembly of ribosomal proteins into the subunit. Circularly permuted GTPase that catalyzes slow GTP hydrolysis, GTPase activity is stimulated by the 30S ribosomal subunit. The chain is Small ribosomal subunit biogenesis GTPase RsgA from Salmonella agona (strain SL483).